The sequence spans 222 residues: von Willebrand factor C domain-containing protein 2-like (222 aa).

An N-terminal signal peptide occupies residues 1–21 (MALHIHEACILLLVIPGLVTS). 2 VWFC domains span residues 51-110 (KGCV…PECK) and 114-172 (NFCE…PVCK).

Peripherally associated with AMPAR complex. AMPAR complex consists of an inner core made of 4 pore-forming GluA/GRIA proteins (GRIA1, GRIA2, GRIA3 and GRIA4) and 4 major auxiliary subunits arranged in a twofold symmetry. One of the two pairs of distinct binding sites is occupied either by CNIH2, CNIH3 or CACNG2, CACNG3. The other harbors CACNG2, CACNG3, CACNG4, CACNG8 or GSG1L. This inner core of AMPAR complex is complemented by outer core constituents binding directly to the GluA/GRIA proteins at sites distinct from the interaction sites of the inner core constituents. Outer core constituents include at least PRRT1, PRRT2, CKAMP44/SHISA9, FRRS1L and NRN1. The proteins of the inner and outer core serve as a platform for other, more peripherally associated AMPAR constituents, including VWC2L. Alone or in combination, these auxiliary subunits control the gating and pharmacology of the AMPAR complex and profoundly impact their biogenesis and protein processing. In terms of tissue distribution, predominantly expressed in the brain (at protein level). Also detected in bones, including femur and calvaria, heart, lung and kidney. Isoform 5 is predominant in lung and heart, compared to isoforms 1 and 3. Isoform 4 is expressed in femur and calvaria at higher levels than isoforms 1 and 5. Isoforms 1 and 4 are expressed at higher levels than isoform 5 in kidney and brain.

The protein resides in the secreted. The protein localises to the synapse. Its function is as follows. May play a role in neurogenesis. May promote matrix mineralization, but has been shown to weakly, but significantly inhibit BMP2 and BMP6 activity in a preosteoblastic cell line. This is von Willebrand factor C domain-containing protein 2-like (Vwc2l) from Mus musculus (Mouse).